The chain runs to 551 residues: Cu(2+) suppressing and bleomycin sensitive protein 1 (551 aa).

2 coiled-coil regions span residues 174-213 (REID…EEID) and 249-300 (NSLL…DSGK). Residues 513 to 551 (EEKAQNSTSSDGSDDDDNGESGIDSNSNDSEPESEYQQE) are disordered. Residues 532-541 (ESGIDSNSND) are compositionally biased toward low complexity. Positions 542–551 (SEPESEYQQE) are enriched in acidic residues.

The protein belongs to the CUB1 family. As to quaternary structure, monomer. Post-translationally, phosphorylated by PKA in vitro.

The protein localises to the cytoplasm. It is found in the nucleus. Functionally, involved in bleomycin tolerance with links to DNA repair and/or proteasome function. This is Cu(2+) suppressing and bleomycin sensitive protein 1 (CUB1) from Saccharomyces cerevisiae (strain ATCC 204508 / S288c) (Baker's yeast).